We begin with the raw amino-acid sequence, 158 residues long: NADH-quinone oxidoreductase subunit B (158 aa).

[4Fe-4S] cluster is bound by residues Cys37, Cys38, Cys102, and Cys132.

It belongs to the complex I 20 kDa subunit family. NDH-1 is composed of 14 different subunits. Subunits NuoB, C, D, E, F, and G constitute the peripheral sector of the complex. Requires [4Fe-4S] cluster as cofactor.

The protein localises to the cell inner membrane. The catalysed reaction is a quinone + NADH + 5 H(+)(in) = a quinol + NAD(+) + 4 H(+)(out). NDH-1 shuttles electrons from NADH, via FMN and iron-sulfur (Fe-S) centers, to quinones in the respiratory chain. Couples the redox reaction to proton translocation (for every two electrons transferred, four hydrogen ions are translocated across the cytoplasmic membrane), and thus conserves the redox energy in a proton gradient. The chain is NADH-quinone oxidoreductase subunit B from Alkalilimnicola ehrlichii (strain ATCC BAA-1101 / DSM 17681 / MLHE-1).